Consider the following 628-residue polypeptide: tRNA (carboxymethyluridine(34)-5-O)-methyltransferase alkbh8 (628 aa).

An RRM domain is found at 43–123 (QSLVVANGGL…ITLYLSFVEK (81 aa)). One can recognise a Fe2OG dioxygenase domain in the interval 218–335 (DPDQLTINQY…RTSFTFRKVR (118 aa)). 2-oxoglutarate is bound at residue 225 to 227 (NQY). H236 and D238 together coordinate Fe cation. A Zn(2+)-binding site is contributed by H240. H290 serves as a coordination point for Fe cation. 2 residues coordinate 2-oxoglutarate: R326 and R332. Residues C339, C341, and C347 each coordinate Zn(2+). The interval 410–628 (ADVGCGNGKY…GNWCVILEKL (219 aa)) is methyltransferase domain. The disordered stretch occupies residues 563–582 (PTNKSKVTPENKEQNEKEHG). Basic and acidic residues predominate over residues 569-582 (VTPENKEQNEKEHG).

This sequence belongs to the alkB family. Fe(2+) is required as a cofactor.

It is found in the cytoplasm. The protein localises to the nucleus. The enzyme catalyses 5-(carboxymethyl)uridine(34) in tRNA + S-adenosyl-L-methionine = 5-(2-methoxy-2-oxoethyl)uridine(34) in tRNA + S-adenosyl-L-homocysteine. In terms of biological role, catalyzes the methylation of 5-carboxymethyl uridine to 5-methylcarboxymethyl uridine at the wobble position of the anticodon loop in tRNA via its methyltransferase domain. Catalyzes the last step in the formation of 5-methylcarboxymethyl uridine at the wobble position of the anticodon loop in target tRNA. Has a preference for tRNA(Arg) and tRNA(Glu), and does not bind tRNA(Lys). Binds tRNA and catalyzes the iron and alpha-ketoglutarate dependent hydroxylation of 5-methylcarboxymethyl uridine at the wobble position of the anticodon loop in tRNA via its dioxygenase domain, giving rise to 5-(S)-methoxycarbonylhydroxymethyluridine; has a preference for tRNA(Gly). Required for normal survival after DNA damage. May inhibit apoptosis and promote cell survival and angiogenesis. The chain is tRNA (carboxymethyluridine(34)-5-O)-methyltransferase alkbh8 (alkbh8) from Xenopus tropicalis (Western clawed frog).